The chain runs to 629 residues: MFYPDPFDVIIIGGGHAGTEAAMAAARMGQQTLLLTHNIDTLGQMSCNPAIGGIGKGHLVKEVDALGGLMAKAIDQAGIQFRILNASKGPAVRATRAQADRVLYRQAVRTALENQPNLMIFQQAVEDLIVENDRVVGAVTQMGLKFRAKAVVLTVGTFLDGKIHIGLDNYSGGRAGDPPSIPLSRRLRELPLRVGRLKTGTPPRIDARTIDFSVLAQQHGDNPMPVFSFMGNASQHPQQVPCYITHTNEKTHDVIRSNLDRSPMYAGVIEGVGPRYCPSIEDKVMRFAERNQHQIFLEPEGLTSNEIYPNGISTSLPFDVQMQIVRSMQGMENAKIVRPGYAIEYDFFDPRDLKPTLESKFIQGLFFAGQINGTTGYEEAAAQGLLAGLNAARLSADKEGWAPARSQAYLGVLVDDLCTLGTKEPYRMFTSRAEYRLMLREDNADLRLTEIGRELGLVDDERWARFNEKLENIERERQRLKSTWVTPSAEAAAEVNAHLTAPLSREASGEDLLRRPEMTYEKLTTLTPFAPALTDEQAAEQVEIQVKYEGYIARQQDEIEKQLRNENTLLPATLDYRQVSGLSNEVIAKLNDHKPASIGQASRISGVTPAAISILLVWLKKQGMLRRSA.

Residues 13-18 (GGGHAG), V125, and S180 contribute to the FAD site. 273-287 (GPRYCPSIEDKVMRF) is a binding site for NAD(+). Q370 contributes to the FAD binding site.

Belongs to the MnmG family. Homodimer. Heterotetramer of two MnmE and two MnmG subunits. FAD serves as cofactor.

The protein localises to the cytoplasm. Functionally, NAD-binding protein involved in the addition of a carboxymethylaminomethyl (cmnm) group at the wobble position (U34) of certain tRNAs, forming tRNA-cmnm(5)s(2)U34. This chain is tRNA uridine 5-carboxymethylaminomethyl modification enzyme MnmG, found in Escherichia coli O45:K1 (strain S88 / ExPEC).